The following is a 263-amino-acid chain: Ribosomal RNA large subunit methyltransferase E (263 aa).

The S-adenosyl-L-methionine site is built by Gly48, Trp50, Asp68, Asp88, and Asp118. Lys158 serves as the catalytic Proton acceptor. Residues 205-263 (PVREGDIVEATIEDIGEEGDGIAKVENFTVFVSGVEDGETVEVRIDDVKPRYAFAEPVE) form the TRAM domain.

Belongs to the class I-like SAM-binding methyltransferase superfamily. RNA methyltransferase RlmE family.

It is found in the cytoplasm. It catalyses the reaction uridine(2552) in 23S rRNA + S-adenosyl-L-methionine = 2'-O-methyluridine(2552) in 23S rRNA + S-adenosyl-L-homocysteine + H(+). Its function is as follows. Specifically methylates the uridine in position 2552 of 23S rRNA at the 2'-O position of the ribose in the fully assembled 50S ribosomal subunit. The sequence is that of Ribosomal RNA large subunit methyltransferase E from Haloarcula marismortui (strain ATCC 43049 / DSM 3752 / JCM 8966 / VKM B-1809) (Halobacterium marismortui).